The sequence spans 419 residues: Serine hydroxymethyltransferase 1 (419 aa).

(6S)-5,6,7,8-tetrahydrofolate-binding positions include L121 and 125 to 127 (GHL). An N6-(pyridoxal phosphate)lysine modification is found at K230. 356 to 358 (SPF) serves as a coordination point for (6S)-5,6,7,8-tetrahydrofolate.

The protein belongs to the SHMT family. In terms of assembly, homodimer. It depends on pyridoxal 5'-phosphate as a cofactor.

The protein resides in the cytoplasm. It carries out the reaction (6R)-5,10-methylene-5,6,7,8-tetrahydrofolate + glycine + H2O = (6S)-5,6,7,8-tetrahydrofolate + L-serine. The protein operates within one-carbon metabolism; tetrahydrofolate interconversion. It functions in the pathway amino-acid biosynthesis; glycine biosynthesis; glycine from L-serine: step 1/1. In terms of biological role, catalyzes the reversible interconversion of serine and glycine with tetrahydrofolate (THF) serving as the one-carbon carrier. This reaction serves as the major source of one-carbon groups required for the biosynthesis of purines, thymidylate, methionine, and other important biomolecules. Also exhibits THF-independent aldolase activity toward beta-hydroxyamino acids, producing glycine and aldehydes, via a retro-aldol mechanism. This chain is Serine hydroxymethyltransferase 1, found in Colwellia psychrerythraea (strain 34H / ATCC BAA-681) (Vibrio psychroerythus).